A 438-amino-acid polypeptide reads, in one-letter code: ATP-dependent RNA helicase RhlB (438 aa).

Positions Gln-9 to Ala-37 match the Q motif motif. Residues Leu-40–Val-219 enclose the Helicase ATP-binding domain. Ala-53–Thr-60 contacts ATP. The DEAD box motif lies at Asp-165–Asp-168. The Helicase C-terminal domain maps to Lys-243 to Leu-390. The segment at Thr-395 to Ser-438 is disordered. Basic residues predominate over residues Pro-428 to Ser-438.

Belongs to the DEAD box helicase family. RhlB subfamily. Component of the RNA degradosome, which is a multiprotein complex involved in RNA processing and mRNA degradation.

The protein localises to the cytoplasm. It catalyses the reaction ATP + H2O = ADP + phosphate + H(+). DEAD-box RNA helicase involved in RNA degradation. Has RNA-dependent ATPase activity and unwinds double-stranded RNA. This chain is ATP-dependent RNA helicase RhlB, found in Shewanella baltica (strain OS185).